Reading from the N-terminus, the 211-residue chain is Bcl-2-related ovarian killer protein homolog B (211 aa).

The BH4 motif lies at 32-44 (KELCRDFIHSRIT). The BH3 motif lies at 67–83 (VSVVLLKLGDELECMRP). The BH1 motif lies at 113–132 (EVIAMGITWGKVVAIYAVAA). The BH2 motif lies at 165-179 (WLKKRGGWVDILKCV). Residues 190 to 210 (WLSTAVLTWREFIKTMYVYLT) form a helical membrane-spanning segment.

Belongs to the Bcl-2 family. As to expression, expressed strongly in ovary and more weakly in eye. Little expression in other tissues examined.

Its subcellular location is the membrane. In terms of biological role, may play a role in apoptosis. Does not appear to show pro-apoptotic activity when expressed ectopically in early embryos. This Danio rerio (Zebrafish) protein is Bcl-2-related ovarian killer protein homolog B (bokb).